The primary structure comprises 422 residues: Enolase (422 aa).

Position 162 (glutamine 162) interacts with (2R)-2-phosphoglycerate. The active-site Proton donor is glutamate 204. Mg(2+) is bound by residues aspartate 241, glutamate 284, and aspartate 311. Residues lysine 336, arginine 365, serine 366, and lysine 387 each contribute to the (2R)-2-phosphoglycerate site. The Proton acceptor role is filled by lysine 336.

Belongs to the enolase family. In terms of assembly, component of the RNA degradosome, a multiprotein complex involved in RNA processing and mRNA degradation. Requires Mg(2+) as cofactor.

The protein resides in the cytoplasm. It is found in the secreted. Its subcellular location is the cell surface. The catalysed reaction is (2R)-2-phosphoglycerate = phosphoenolpyruvate + H2O. The protein operates within carbohydrate degradation; glycolysis; pyruvate from D-glyceraldehyde 3-phosphate: step 4/5. Catalyzes the reversible conversion of 2-phosphoglycerate (2-PG) into phosphoenolpyruvate (PEP). It is essential for the degradation of carbohydrates via glycolysis. This is Enolase from Legionella pneumophila (strain Lens).